The sequence spans 195 residues: Segregation and condensation protein B (195 aa).

This sequence belongs to the ScpB family. Homodimer. Homodimerization may be required to stabilize the binding of ScpA to the Smc head domains. Component of a cohesin-like complex composed of ScpA, ScpB and the Smc homodimer, in which ScpA and ScpB bind to the head domain of Smc. The presence of the three proteins is required for the association of the complex with DNA.

It localises to the cytoplasm. Functionally, participates in chromosomal partition during cell division. May act via the formation of a condensin-like complex containing Smc and ScpA that pull DNA away from mid-cell into both cell halves. In Clostridium perfringens (strain SM101 / Type A), this protein is Segregation and condensation protein B.